The chain runs to 463 residues: Elongation factor 1-alpha 2 (463 aa).

G2 bears the N,N,N-trimethylglycine mark. The tr-type G domain occupies 5–242; it reads KTHINIVVIG…DTILPPTRPT (238 aa). The tract at residues 14-21 is G1; the sequence is GHVDSGKS. GTP-binding residues include D17, S18, G19, K20, S21, and T22. D17 serves as a coordination point for Mg(2+). An N6,N6,N6-trimethyllysine; alternate modification is found at K36. An N6,N6-dimethyllysine; alternate modification is found at K36. K36 carries the N6-methyllysine; alternate modification. K55 is modified (N6,N6,N6-trimethyllysine). K55 carries the post-translational modification N6,N6-dimethyllysine. Residues 70-74 are G2; that stretch reads GITID. N6,N6,N6-trimethyllysine is present on K79. Residues 91-94 form a G3 region; the sequence is DAPG. Positions 153, 154, and 156 each coordinate GTP. A G4 region spans residues 153–156; that stretch reads NKMD. S163 carries the post-translational modification Phosphoserine. K165 bears the N6,N6-dimethyllysine; alternate mark. At K165 the chain carries N6-methyllysine; alternate. K165 bears the N6,N6,N6-trimethyllysine; alternate; by EEF1AKMT3 mark. The residue at position 179 (K179) is an N6-acetyllysine. Residues S194, G195, and W196 each coordinate GTP. The segment at 194 to 196 is G5; that stretch reads SGW. Phosphoserine is present on S224. Residue T239 is modified to Phosphothreonine. A 5-glutamyl glycerylphosphorylethanolamine mark is found at E301 and E374. N6-acetyllysine is present on K439. Positions 444-463 are disordered; that stretch reads KSGGAGKVTKSAQKAQKAGK.

Belongs to the TRAFAC class translation factor GTPase superfamily. Classic translation factor GTPase family. EF-Tu/EF-1A subfamily. In terms of assembly, homodimer; arranged in a 'head to tail' dimer configuration. Post-translationally, trimethylated at Lys-165 by EEF1AKMT3. Mono-, di-, and trimethylated at Lys-36 by EEF1AKMT4; trimethylated form is predominant. Methylation by EEF1AKMT4 contributes to the fine-tuning of translation rates for a subset of tRNAs. Trimethylated at the N-terminus and dimethylated at Lys-55 by METTL13.

The protein localises to the endoplasmic reticulum membrane. It catalyses the reaction GTP + H2O = GDP + phosphate + H(+). Its function is as follows. Translation elongation factor that catalyzes the GTP-dependent binding of aminoacyl-tRNA (aa-tRNA) to the A-site of ribosomes during the elongation phase of protein synthesis. Base pairing between the mRNA codon and the aa-tRNA anticodon promotes GTP hydrolysis, releasing the aa-tRNA from EEF1A1 and allowing its accommodation into the ribosome. The growing protein chain is subsequently transferred from the P-site peptidyl tRNA to the A-site aa-tRNA, extending it by one amino acid through ribosome-catalyzed peptide bond formation. This is Elongation factor 1-alpha 2 (Eef1a2) from Rattus norvegicus (Rat).